Reading from the N-terminus, the 424-residue chain is Glutamyl-tRNA reductase (424 aa).

Residues 53-56 (TCNR), Ser-111, 116-118 (EPQ), and Gln-122 each bind substrate. Residue Cys-54 is the Nucleophile of the active site. 191–196 (GAGEMI) lines the NADP(+) pocket.

The protein belongs to the glutamyl-tRNA reductase family. In terms of assembly, homodimer.

The catalysed reaction is (S)-4-amino-5-oxopentanoate + tRNA(Glu) + NADP(+) = L-glutamyl-tRNA(Glu) + NADPH + H(+). It participates in porphyrin-containing compound metabolism; protoporphyrin-IX biosynthesis; 5-aminolevulinate from L-glutamyl-tRNA(Glu): step 1/2. Functionally, catalyzes the NADPH-dependent reduction of glutamyl-tRNA(Glu) to glutamate 1-semialdehyde (GSA). This Bordetella bronchiseptica (strain ATCC BAA-588 / NCTC 13252 / RB50) (Alcaligenes bronchisepticus) protein is Glutamyl-tRNA reductase.